A 180-amino-acid polypeptide reads, in one-letter code: Translation initiation factor IF-3 (180 aa).

This sequence belongs to the IF-3 family. Monomer.

The protein resides in the cytoplasm. Functionally, IF-3 binds to the 30S ribosomal subunit and shifts the equilibrium between 70S ribosomes and their 50S and 30S subunits in favor of the free subunits, thus enhancing the availability of 30S subunits on which protein synthesis initiation begins. In Xylella fastidiosa (strain 9a5c), this protein is Translation initiation factor IF-3.